The sequence spans 177 residues: Austinoid biosynthesis clusters protein F (177 aa).

The protein belongs to the trt14 isomerase family. As to quaternary structure, homodimer.

The protein operates within secondary metabolite biosynthesis; terpenoid biosynthesis. Part of the gene cluster B that mediates the biosynthesis of austinol and dehydroaustinol, two fungal meroterpenoids. The first step of the pathway is the synthesis of 3,5-dimethylorsellinic acid by the polyketide synthase ausA. 3,5-dimethylorsellinic acid is then prenylated by the polyprenyl transferase ausN. Further epoxidation by the FAD-dependent monooxygenase ausM and cyclization by the probable terpene cyclase ausL lead to the formation of protoaustinoid A. Protoaustinoid A is then oxidized to spiro-lactone preaustinoid A3 by the combined action of the FAD-binding monooxygenases ausB and ausC, and the dioxygenase ausE. Acid-catalyzed keto-rearrangement and ring contraction of the tetraketide portion of preaustinoid A3 by ausJ lead to the formation of preaustinoid A4. The aldo-keto reductase ausK, with the help of ausH, is involved in the next step by transforming preaustinoid A4 into isoaustinone which is in turn hydroxylated by the P450 monooxygenase ausI to form austinolide. Finally, the cytochrome P450 monooxygenase ausG modifies austinolide to austinol. Austinol can be further modified to dehydroaustinol which forms a diffusible complex with diorcinol that initiates conidiation. Due to genetic rearrangements of the clusters and the subsequent loss of some enzymes, the end products of the Emericella nidulans austinoid biosynthesis clusters are austinol and dehydroaustinol, even if additional enzymes, such as the O-acetyltransferase ausQ and the cytochrome P450 monooxygenase ausR are still functional. In Emericella nidulans (strain FGSC A4 / ATCC 38163 / CBS 112.46 / NRRL 194 / M139) (Aspergillus nidulans), this protein is Austinoid biosynthesis clusters protein F.